Here is a 953-residue protein sequence, read N- to C-terminus: MKRGIRRDPFRKRKLGGRAKKVREPTAVNSFYREASLPSVWASLRRREMVRSGARPGQVLSSGRHTGPAKLTNGKKATYLRKIPRFNADSGYSIHSDSESQAETVHGLDGCASLLRDILRNEDSGSETAYLENRSNSRPLESKRYGSKKKRHEKHTIPLVVQKETSSSDNKKQIPNEASARSERDTSDLEQNWSLQDHYRMYSPIIYQALCEHVQTQMSLMNDLTSKNIPNGIPAVPCHAPSHSESQATPHSSYGLCTSTPVWSLQRPPCPPKVHSEVQTDGNSQFASQGKTVSATCTDVLRNSFNTSPGVPCSLPKTDISAIPTLQQLGLVNGILPQQGIHKETDLLKCIQTYLSLFRSHGKETHLDSQTHRSPTQSQPAFLATNEEKCAREQIREATSERKDLNIHVRDTKTVKDVQKAKNVNKTAEKVRIIKYLLGELKALVAEQEDSEIQRLITEMEACISVLPTVSGNTDIQVEIALAMQPLRSENAQLRRQLRILNQQLREQQKTQKPSGAVDCNLELFSLQSLNMSLQNQLEESLKSQELLQSKNEELLKVIENQKDENKKFSSIFKDKDQTILENKQQYDIEITRIKIELEEALVNVKSSQFKLETAEKENQILGITLRQRDAEVTRLRELTRTLQTSMAKLLSDLSVDSARCKPGNNLTKSLLNIHDKQLQHDPAPAHTSIMSYLNKLETNYSFTHSEPLSTIKNEETIEPDKTYENVLSSRGPQNSNTRGMEEASAPGIISALSKQDSDEGSETMALIEDEHNLDNTIYIPFARSTPEKKSPLSKRLSPQPQIRAATTQLVSNSGLAVSGKENKLCTPVICSSSTKEAEDAPEKLSRASDMKDTQLLKKIKEAIGKIPAATKEPEEQTACHGPSGCLSNSLQVKGNTVCDGSVFTSDLMSDWSISSFSTFTSRDEQDFRNGLAALDANIARLQKSLRTGLLEK.

Basic residues predominate over residues methionine 1–lysine 21. Disordered stretches follow at residues methionine 1–valine 22 and serine 52–threonine 72. Serine 124 bears the Phosphoserine mark. Disordered stretches follow at residues serine 126–leucine 189 and proline 268–alanine 287. Positions tyrosine 145–lysine 154 are enriched in basic residues. Positions aspartate 169–serine 187 are enriched in basic and acidic residues. Residues glutamate 277–alanine 287 show a composition bias toward polar residues. Coiled coils occupy residues leucine 383 to lysine 413 and alanine 483 to glutamate 618. Phosphoserine is present on residues serine 670, serine 754, and serine 798.

In terms of assembly, interacts with CEP63.

The protein resides in the cytoplasm. The protein localises to the cytoskeleton. It localises to the microtubule organizing center. Its subcellular location is the centrosome. It is found in the centriolar satellite. In terms of biological role, negatively regulates centriole duplication. Negatively regulates CEP63 and CDK2 centrosomal localization. This chain is Coiled-coil domain-containing protein 14 (CCDC14), found in Homo sapiens (Human).